Here is a 152-residue protein sequence, read N- to C-terminus: Ribosome maturation factor RimP (152 aa).

This sequence belongs to the RimP family.

It localises to the cytoplasm. In terms of biological role, required for maturation of 30S ribosomal subunits. In Elusimicrobium minutum (strain Pei191), this protein is Ribosome maturation factor RimP.